The following is a 251-amino-acid chain: Uridylate kinase (251 aa).

11–14 (KLSG) contacts ATP. Positions 19 to 24 (GNQGFG) are involved in allosteric activation by GTP. Gly-53 contributes to the UMP binding site. ATP contacts are provided by Gly-54 and Arg-58. UMP contacts are provided by residues Asp-73 and 134 to 141 (TGNPYFTT). Positions 161, 167, and 170 each coordinate ATP.

The protein belongs to the UMP kinase family. Homohexamer.

The protein localises to the cytoplasm. It catalyses the reaction UMP + ATP = UDP + ADP. It participates in pyrimidine metabolism; CTP biosynthesis via de novo pathway; UDP from UMP (UMPK route): step 1/1. Its activity is regulated as follows. Allosterically activated by GTP. Inhibited by UTP. In terms of biological role, catalyzes the reversible phosphorylation of UMP to UDP. This Protochlamydia amoebophila (strain UWE25) protein is Uridylate kinase.